Here is a 430-residue protein sequence, read N- to C-terminus: Enolase (430 aa).

Gln-163 is a (2R)-2-phosphoglycerate binding site. The active-site Proton donor is Glu-205. Mg(2+)-binding residues include Asp-242, Glu-287, and Asp-314. (2R)-2-phosphoglycerate contacts are provided by Lys-339, Arg-368, Ser-369, and Lys-390. Lys-339 functions as the Proton acceptor in the catalytic mechanism.

This sequence belongs to the enolase family. Mg(2+) serves as cofactor.

It localises to the cytoplasm. It is found in the secreted. The protein resides in the cell surface. It catalyses the reaction (2R)-2-phosphoglycerate = phosphoenolpyruvate + H2O. It functions in the pathway carbohydrate degradation; glycolysis; pyruvate from D-glyceraldehyde 3-phosphate: step 4/5. Its function is as follows. Catalyzes the reversible conversion of 2-phosphoglycerate (2-PG) into phosphoenolpyruvate (PEP). It is essential for the degradation of carbohydrates via glycolysis. The chain is Enolase from Geobacillus sp. (strain WCH70).